Consider the following 153-residue polypeptide: Endoribonuclease YbeY (153 aa).

The Zn(2+) site is built by histidine 114, histidine 118, and histidine 124.

It belongs to the endoribonuclease YbeY family. Zn(2+) is required as a cofactor.

The protein localises to the cytoplasm. Single strand-specific metallo-endoribonuclease involved in late-stage 70S ribosome quality control and in maturation of the 3' terminus of the 16S rRNA. In Shewanella sp. (strain MR-7), this protein is Endoribonuclease YbeY.